A 211-amino-acid chain; its full sequence is SsrA-binding protein (211 aa).

The segment at 168 to 211 (KHRLRRPRAQRNTQRSVTPRRTRENKNVRGSKARSARRNVRREN) is disordered. Residues 177–186 (QRNTQRSVTP) show a composition bias toward polar residues. Residues 196 to 211 (RGSKARSARRNVRREN) show a composition bias toward basic residues.

Belongs to the SmpB family.

It localises to the cytoplasm. Functionally, required for rescue of stalled ribosomes mediated by trans-translation. Binds to transfer-messenger RNA (tmRNA), required for stable association of tmRNA with ribosomes. tmRNA and SmpB together mimic tRNA shape, replacing the anticodon stem-loop with SmpB. tmRNA is encoded by the ssrA gene; the 2 termini fold to resemble tRNA(Ala) and it encodes a 'tag peptide', a short internal open reading frame. During trans-translation Ala-aminoacylated tmRNA acts like a tRNA, entering the A-site of stalled ribosomes, displacing the stalled mRNA. The ribosome then switches to translate the ORF on the tmRNA; the nascent peptide is terminated with the 'tag peptide' encoded by the tmRNA and targeted for degradation. The ribosome is freed to recommence translation, which seems to be the essential function of trans-translation. The protein is SsrA-binding protein of Tropheryma whipplei (strain Twist) (Whipple's bacillus).